The primary structure comprises 253 residues: 2-dehydro-3-deoxy-D-gluconate 5-dehydrogenase (253 aa).

Residue 14–38 (LITGCDTGLGQGMAVGLAEAGCDIV) coordinates NAD(+). Residue S145 participates in substrate binding. Catalysis depends on Y158, which acts as the Proton acceptor.

The protein belongs to the short-chain dehydrogenases/reductases (SDR) family.

The catalysed reaction is 2-dehydro-3-deoxy-D-gluconate + NAD(+) = 3-deoxy-D-glycero-2,5-hexodiulosonate + NADH + H(+). The protein operates within glycan metabolism; pectin degradation; 2-dehydro-3-deoxy-D-gluconate from pectin: step 5/5. Functionally, catalyzes the reduction of 2,5-diketo-3-deoxygluconate (DKII or 4,6-dihydroxy-2,5-dioxohexanoate) into 2-keto-3-deoxygluconate (KDG or 2-dehydro-3-deoxygluconate) with a concomitant oxidation of NADH. The sequence is that of 2-dehydro-3-deoxy-D-gluconate 5-dehydrogenase (kduD) from Dickeya dadantii (strain 3937) (Erwinia chrysanthemi (strain 3937)).